Consider the following 1531-residue polypeptide: DNA topoisomerase 2-alpha (1531 aa).

Met-1 bears the N-acetylmethionine mark. Ser-4 bears the Phosphoserine mark. Lys-17 is covalently cross-linked (Glycyl lysine isopeptide (Lys-Gly) (interchain with G-Cter in SUMO2)). ATP contacts are provided by residues Asn-91, Asn-120, and 148 to 150; that span reads SSN. Residues Lys-156 and Lys-157 each participate in a glycyl lysine isopeptide (Lys-Gly) (interchain with G-Cter in SUMO2) cross-link. 161–168 is an ATP binding site; it reads GRNGYGAK. Residue Lys-261 forms a Glycyl lysine isopeptide (Lys-Gly) (interchain with G-Cter in SUMO2) linkage. Position 282 is a phosphothreonine (Thr-282). Residues 342 to 344 are interaction with DNA; that stretch reads KKK. Lys-352 participates in a covalent cross-link: Glycyl lysine isopeptide (Lys-Gly) (interchain with G-Cter in SUMO2). 376–378 provides a ligand contact to ATP; it reads QTK. Glycyl lysine isopeptide (Lys-Gly) (interchain with G-Cter in SUMO2) cross-links involve residues Lys-386, Lys-397, Lys-416, Lys-418, Lys-425, and Lys-440. The 118-residue stretch at 455 to 572 folds into the Toprim domain; that stretch reads CTLILTEGDS…SLLRHRFLEE (118 aa). Position 461 (Glu-461) interacts with Mg(2+). Glycyl lysine isopeptide (Lys-Gly) (interchain with G-Cter in SUMO2) cross-links involve residues Lys-466, Lys-480, and Lys-529. Mg(2+) is bound by residues Asp-541 and Asp-543. Glycyl lysine isopeptide (Lys-Gly) (interchain with G-Cter in SUMO2) cross-links involve residues Lys-584, Lys-599, Lys-614, Lys-622, Lys-625, Lys-632, Lys-639, Lys-655, Lys-662, and Lys-676. Positions 715–1171 constitute a Topo IIA-type catalytic domain; it reads IPSMVDGLKP…SPSDLWKEDL (457 aa). The active-site O-(5'-phospho-DNA)-tyrosine intermediate is Tyr-805. Residues 990–999 are interaction with DNA; the sequence is KLQTSLTCNS. A Nuclear export signal motif is present at residues 1018–1028; that stretch reads ILRDFFELRLK. Residue Lys-1075 forms a Glycyl lysine isopeptide (Lys-Gly) (interchain with G-Cter in SUMO2) linkage. Disordered stretches follow at residues 1090 to 1123 and 1184 to 1531; these read WKEA…DSGP and KEKQ…DDLF. The span at 1099-1108 shows a compositional bias: acidic residues; sequence DEEENEESDN. At Ser-1106 the chain carries Phosphoserine; by CK1. Glycyl lysine isopeptide (Lys-Gly) (interchain with G-Cter in SUMO2) cross-links involve residues Lys-1114, Lys-1196, and Lys-1204. At Thr-1205 the chain carries Phosphothreonine. At Ser-1213 the chain carries Phosphoserine. Lys-1228 is covalently cross-linked (Glycyl lysine isopeptide (Lys-Gly) (interchain with G-Cter in SUMO2)). Lys-1240 participates in a covalent cross-link: Glycyl lysine isopeptide (Lys-Gly) (interchain with G-Cter in SUMO1); alternate. A Glycyl lysine isopeptide (Lys-Gly) (interchain with G-Cter in SUMO2); alternate cross-link involves residue Lys-1240. Thr-1244 carries the post-translational modification Phosphothreonine. Position 1247 is a phosphoserine (Ser-1247). The segment covering 1256-1272 has biased composition (basic and acidic residues); the sequence is EGLKQRLEKKQKREPGT. Residues Lys-1259, Lys-1276, Lys-1283, and Lys-1286 each participate in a glycyl lysine isopeptide (Lys-Gly) (interchain with G-Cter in SUMO2) cross-link. Phosphoserine occurs at positions 1295, 1297, 1299, and 1302. Residue Thr-1327 is modified to Phosphothreonine. Residues 1330-1349 are compositionally biased toward acidic residues; the sequence is LDSDEDFSDFDEKTDDEDFV. Phosphoserine occurs at positions 1332 and 1337. Phosphothreonine; by PLK3 is present on Thr-1343. Ser-1351 and Ser-1354 each carry phosphoserine. Glycyl lysine isopeptide (Lys-Gly) (interchain with G-Cter in SUMO2) cross-links involve residues Lys-1363, Lys-1367, and Lys-1373. Ser-1374 and Ser-1377 each carry phosphoserine. Residue Lys-1385 forms a Glycyl lysine isopeptide (Lys-Gly) (interchain with G-Cter in SUMO2) linkage. Ser-1387, Ser-1391, Ser-1392, and Ser-1393 each carry phosphoserine. Positions 1406–1431 are enriched in low complexity; sequence TNPVPKKNVTVKKTAAKSQSSTSTTG. Residue Lys-1422 forms a Glycyl lysine isopeptide (Lys-Gly) (interchain with G-Cter in SUMO2); alternate linkage. Lys-1422 bears the N6-acetyllysine; alternate mark. The tract at residues 1433–1439 is interaction with PLSCR1; the sequence is KKRAAPK. Lys-1442 is covalently cross-linked (Glycyl lysine isopeptide (Lys-Gly) (interchain with G-Cter in SUMO2); alternate). The residue at position 1442 (Lys-1442) is an N6-acetyllysine; alternate. Residue Ser-1449 is modified to Phosphoserine. Glycyl lysine isopeptide (Lys-Gly) (interchain with G-Cter in SUMO2) cross-links involve residues Lys-1454 and Lys-1459. Phosphoserine; by CK2 is present on Ser-1469. Position 1470 is a phosphothreonine (Thr-1470). Ser-1471, Ser-1474, and Ser-1476 each carry phosphoserine. Glycyl lysine isopeptide (Lys-Gly) (interchain with G-Cter in SUMO2) cross-links involve residues Lys-1484 and Lys-1492. Basic and acidic residues predominate over residues 1491 to 1502; that stretch reads SKGESDDFHMDF. 3 positions are modified to phosphoserine: Ser-1495, Ser-1504, and Ser-1525.

Belongs to the type II topoisomerase family. As to quaternary structure, homodimer. Interacts with COPS5. Interacts with RECQL5; this stimulates DNA decatenation. Interacts with SETMAR; stimulates the topoisomerase activity. Interacts with DHX9; this interaction occurs in a E2 enzyme UBE2I- and RNA-dependent manner, negatively regulates DHX9-mediated double-stranded DNA and RNA duplex helicase activity and stimulates TOP2A-mediated supercoiled DNA relaxation activity. Interacts with HNRNPU (via C-terminus); this interaction protects the topoisomerase TOP2A from degradation and positively regulates the relaxation of supercoiled DNA in a RNA-dependent manner. Interacts with MCM3AP isoform GANP. Interacts with ERCC6. Interacts with PLSCR1. Interacts with GCNA; this interaction allows the resolution of topoisomerase II (TOP2A) DNA-protein cross-links. Interacts with POL1RA/RPA1 (via dock II) and UBTF in the context of Pol I complex; may assist Pol I transcription initiation by releasing supercoils occurring during DNA unwinding. Interacts with TPRN; TPRN interacts with a number of DNA damage response proteins, is recruited to sites of DNA damage and may play a role in DNA damage repair. Requires Mg(2+) as cofactor. Mn(2+) serves as cofactor. It depends on Ca(2+) as a cofactor. Post-translationally, phosphorylation has no effect on catalytic activity. However, phosphorylation at Ser-1106 by CSNK1D/CK1 promotes DNA cleavable complex formation. In terms of processing, (Microbial infection) Deubiquitinated by Epstein-Barr virus BPLF1; leading to stabilized SUMOylated TOP2A trapped in cleavage complexes, which halts the DNA damage response to TOP2A-induced double-strand DNA breaks. SUMOylated. Expressed in the tonsil, spleen, lymph node, thymus, skin, pancreas, testis, colon, kidney, liver, brain and lung. Also found in high-grade lymphomas, squamous cell lung tumors and seminomas.

The protein resides in the cytoplasm. The protein localises to the nucleus. Its subcellular location is the nucleoplasm. It localises to the nucleolus. It catalyses the reaction ATP-dependent breakage, passage and rejoining of double-stranded DNA.. With respect to regulation, specifically inhibited by the intercalating agent amsacrine. In terms of biological role, key decatenating enzyme that alters DNA topology by binding to two double-stranded DNA molecules, generating a double-stranded break in one of the strands, passing the intact strand through the broken strand, and religating the broken strand. May play a role in regulating the period length of BMAL1 transcriptional oscillation. The chain is DNA topoisomerase 2-alpha (TOP2A) from Homo sapiens (Human).